We begin with the raw amino-acid sequence, 219 residues long: Large ribosomal subunit protein uL4c (219 aa).

Residues 53–81 are disordered; sequence REHTASTKTKSQVRGGGKKPWKQKGTGRA. Positions 68-79 are enriched in basic residues; sequence GGKKPWKQKGTG.

This sequence belongs to the universal ribosomal protein uL4 family. In terms of assembly, part of the 50S ribosomal subunit.

Its subcellular location is the plastid. The protein resides in the chloroplast. Its function is as follows. Probably binds the 23S rRNA. The sequence is that of Large ribosomal subunit protein uL4c (rpl4) from Cyanidium caldarium (Red alga).